We begin with the raw amino-acid sequence, 367 residues long: UDP-N-acetylglucosamine--N-acetylmuramyl-(pentapeptide) pyrophosphoryl-undecaprenol N-acetylglucosamine transferase (367 aa).

Residues 15-17 (TGG), N127, R163, S191, I249, and Q294 each bind UDP-N-acetyl-alpha-D-glucosamine.

Belongs to the glycosyltransferase 28 family. MurG subfamily.

It localises to the cell inner membrane. The enzyme catalyses di-trans,octa-cis-undecaprenyl diphospho-N-acetyl-alpha-D-muramoyl-L-alanyl-D-glutamyl-meso-2,6-diaminopimeloyl-D-alanyl-D-alanine + UDP-N-acetyl-alpha-D-glucosamine = di-trans,octa-cis-undecaprenyl diphospho-[N-acetyl-alpha-D-glucosaminyl-(1-&gt;4)]-N-acetyl-alpha-D-muramoyl-L-alanyl-D-glutamyl-meso-2,6-diaminopimeloyl-D-alanyl-D-alanine + UDP + H(+). The protein operates within cell wall biogenesis; peptidoglycan biosynthesis. Its function is as follows. Cell wall formation. Catalyzes the transfer of a GlcNAc subunit on undecaprenyl-pyrophosphoryl-MurNAc-pentapeptide (lipid intermediate I) to form undecaprenyl-pyrophosphoryl-MurNAc-(pentapeptide)GlcNAc (lipid intermediate II). This is UDP-N-acetylglucosamine--N-acetylmuramyl-(pentapeptide) pyrophosphoryl-undecaprenol N-acetylglucosamine transferase from Burkholderia cenocepacia (strain HI2424).